The chain runs to 37 residues: Large ribosomal subunit protein bL36 (37 aa).

The protein belongs to the bacterial ribosomal protein bL36 family.

The sequence is that of Large ribosomal subunit protein bL36 from Ureaplasma urealyticum serovar 10 (strain ATCC 33699 / Western).